We begin with the raw amino-acid sequence, 401 residues long: Argininosuccinate synthase (401 aa).

Residues Ala-10–Ser-18 and Ala-38 each bind ATP. Tyr-89 contributes to the L-citrulline binding site. Gly-119 is an ATP binding site. L-aspartate-binding residues include Thr-121, Asn-125, and Asp-126. Position 125 (Asn-125) interacts with L-citrulline. Arg-129, Ser-177, Ser-186, Glu-262, and Tyr-274 together coordinate L-citrulline.

The protein belongs to the argininosuccinate synthase family. Type 1 subfamily. In terms of assembly, homotetramer.

Its subcellular location is the cytoplasm. The catalysed reaction is L-citrulline + L-aspartate + ATP = 2-(N(omega)-L-arginino)succinate + AMP + diphosphate + H(+). It participates in amino-acid biosynthesis; L-arginine biosynthesis; L-arginine from L-ornithine and carbamoyl phosphate: step 2/3. The polypeptide is Argininosuccinate synthase (Prochlorococcus marinus (strain MIT 9303)).